Here is a 771-residue protein sequence, read N- to C-terminus: Probable exo-1,4-beta-xylosidase bxlB (771 aa).

The N-terminal stretch at 1–25 (MVGLTPQHYGNAIALMTYLASTALA) is a signal peptide. Asn-67 is a glycosylation site (N-linked (GlcNAc...) asparagine). Asp-293 is a catalytic residue. Asn-305, Asn-345, Asn-423, Asn-462, and Asn-463 each carry an N-linked (GlcNAc...) asparagine glycan.

The protein belongs to the glycosyl hydrolase 3 family.

The protein resides in the secreted. It catalyses the reaction Hydrolysis of (1-&gt;4)-beta-D-xylans, to remove successive D-xylose residues from the non-reducing termini.. Its pathway is glycan degradation; xylan degradation. In terms of biological role, xylan 1,4-beta-xylosidase involved in the hydrolysis of xylan, a major structural heterogeneous polysaccharide found in plant biomass representing the second most abundant polysaccharide in the biosphere, after cellulose. This is Probable exo-1,4-beta-xylosidase bxlB (bxlB) from Aspergillus clavatus (strain ATCC 1007 / CBS 513.65 / DSM 816 / NCTC 3887 / NRRL 1 / QM 1276 / 107).